We begin with the raw amino-acid sequence, 418 residues long: D-amino acid dehydrogenase (418 aa).

3 to 17 lines the FAD pocket; that stretch reads VLVLGAGVAGVSSAW.

The protein belongs to the DadA oxidoreductase family. FAD serves as cofactor.

It carries out the reaction a D-alpha-amino acid + A + H2O = a 2-oxocarboxylate + AH2 + NH4(+). It participates in amino-acid degradation; D-alanine degradation; NH(3) and pyruvate from D-alanine: step 1/1. Functionally, oxidative deamination of D-amino acids. This Neisseria meningitidis serogroup C (strain 053442) protein is D-amino acid dehydrogenase.